A 275-amino-acid polypeptide reads, in one-letter code: Ribosomal RNA small subunit methyltransferase A (275 aa).

S-adenosyl-L-methionine contacts are provided by Asn19, Leu21, Gly46, Glu71, Asp94, and Asn117.

Belongs to the class I-like SAM-binding methyltransferase superfamily. rRNA adenine N(6)-methyltransferase family. RsmA subfamily.

The protein localises to the cytoplasm. The enzyme catalyses adenosine(1518)/adenosine(1519) in 16S rRNA + 4 S-adenosyl-L-methionine = N(6)-dimethyladenosine(1518)/N(6)-dimethyladenosine(1519) in 16S rRNA + 4 S-adenosyl-L-homocysteine + 4 H(+). In terms of biological role, specifically dimethylates two adjacent adenosines (A1518 and A1519) in the loop of a conserved hairpin near the 3'-end of 16S rRNA in the 30S particle. May play a critical role in biogenesis of 30S subunits. This chain is Ribosomal RNA small subunit methyltransferase A, found in Burkholderia pseudomallei (strain 668).